Reading from the N-terminus, the 289-residue chain is Acetyl-coenzyme A carboxylase carboxyl transferase subunit beta (289 aa).

The CoA carboxyltransferase N-terminal domain occupies 34–289 (MWVKCNKCGE…KLINMHQNSF (256 aa)). Residues Cys-38, Cys-41, Cys-57, and Cys-60 each contribute to the Zn(2+) site. The segment at 38-60 (CNKCGEILYQNDLEKNYMVCNLC) adopts a C4-type zinc-finger fold.

This sequence belongs to the AccD/PCCB family. In terms of assembly, acetyl-CoA carboxylase is a heterohexamer composed of biotin carboxyl carrier protein (AccB), biotin carboxylase (AccC) and two subunits each of ACCase subunit alpha (AccA) and ACCase subunit beta (AccD). Requires Zn(2+) as cofactor.

It is found in the cytoplasm. It catalyses the reaction N(6)-carboxybiotinyl-L-lysyl-[protein] + acetyl-CoA = N(6)-biotinyl-L-lysyl-[protein] + malonyl-CoA. It functions in the pathway lipid metabolism; malonyl-CoA biosynthesis; malonyl-CoA from acetyl-CoA: step 1/1. Component of the acetyl coenzyme A carboxylase (ACC) complex. Biotin carboxylase (BC) catalyzes the carboxylation of biotin on its carrier protein (BCCP) and then the CO(2) group is transferred by the transcarboxylase to acetyl-CoA to form malonyl-CoA. This is Acetyl-coenzyme A carboxylase carboxyl transferase subunit beta from Clostridium botulinum (strain ATCC 19397 / Type A).